Consider the following 245-residue polypeptide: tRNA pseudouridine synthase A (245 aa).

The Nucleophile role is filled by Asp52. Tyr111 provides a ligand contact to substrate.

This sequence belongs to the tRNA pseudouridine synthase TruA family. Homodimer.

It catalyses the reaction uridine(38/39/40) in tRNA = pseudouridine(38/39/40) in tRNA. Formation of pseudouridine at positions 38, 39 and 40 in the anticodon stem and loop of transfer RNAs. In Wolbachia sp. subsp. Drosophila simulans (strain wRi), this protein is tRNA pseudouridine synthase A.